Reading from the N-terminus, the 270-residue chain is Formamidopyrimidine-DNA glycosylase (270 aa).

The active-site Schiff-base intermediate with DNA is proline 2. Catalysis depends on glutamate 3, which acts as the Proton donor. Lysine 57 serves as the catalytic Proton donor; for beta-elimination activity. The DNA site is built by histidine 90, arginine 109, and lysine 150. The segment at 235 to 269 adopts an FPG-type zinc-finger fold; that stretch reads LVYGNKDKPCPRCGTKIKSIIIGQRNSFFCPQCQK. The Proton donor; for delta-elimination activity role is filled by arginine 259.

Belongs to the FPG family. Monomer. The cofactor is Zn(2+).

It carries out the reaction Hydrolysis of DNA containing ring-opened 7-methylguanine residues, releasing 2,6-diamino-4-hydroxy-5-(N-methyl)formamidopyrimidine.. It catalyses the reaction 2'-deoxyribonucleotide-(2'-deoxyribose 5'-phosphate)-2'-deoxyribonucleotide-DNA = a 3'-end 2'-deoxyribonucleotide-(2,3-dehydro-2,3-deoxyribose 5'-phosphate)-DNA + a 5'-end 5'-phospho-2'-deoxyribonucleoside-DNA + H(+). Functionally, involved in base excision repair of DNA damaged by oxidation or by mutagenic agents. Acts as a DNA glycosylase that recognizes and removes damaged bases. Has a preference for oxidized purines, such as 7,8-dihydro-8-oxoguanine (8-oxoG). Has AP (apurinic/apyrimidinic) lyase activity and introduces nicks in the DNA strand. Cleaves the DNA backbone by beta-delta elimination to generate a single-strand break at the site of the removed base with both 3'- and 5'-phosphates. The sequence is that of Formamidopyrimidine-DNA glycosylase from Histophilus somni (strain 129Pt) (Haemophilus somnus).